Consider the following 368-residue polypeptide: Saccharopine dehydrogenase [NAD(+), L-lysine-forming] (368 aa).

L-saccharopine is bound by residues R18 and K77. The active-site Proton acceptor is the K77. Position 85 is a phosphoserine (S85). H96 (proton donor) is an active-site residue. Q101 is an L-saccharopine binding site. R130 serves as a coordination point for NAD(+). Residues R131 and F135 each coordinate L-saccharopine. NAD(+) contacts are provided by residues 203–204, D227, T231, Y251, and V278; that span reads GR. Cysteines 205 and 249 form a disulfide. 279–281 provides a ligand contact to L-saccharopine; the sequence is SCD. 319–322 is an NAD(+) binding site; the sequence is IDHL.

Belongs to the AlaDH/PNT family. As to quaternary structure, monomer.

The catalysed reaction is L-saccharopine + NAD(+) + H2O = L-lysine + 2-oxoglutarate + NADH + H(+). Its pathway is amino-acid biosynthesis; L-lysine biosynthesis via AAA pathway; L-lysine from L-alpha-aminoadipate (fungal route): step 3/3. In terms of biological role, catalyzes the NAD(+)-dependent cleavage of saccharopine to L-lysine and 2-oxoglutarate, the final step in the alpha-aminoadipate (AAA) pathway for lysin biosynthesis. In Schizosaccharomyces pombe (strain 972 / ATCC 24843) (Fission yeast), this protein is Saccharopine dehydrogenase [NAD(+), L-lysine-forming].